The primary structure comprises 98 residues: Essential MCU regulator, mitochondrial (98 aa).

The helical transmembrane segment at 52–72 (ITPFGLFGIIATVIPGLLIGA) threads the bilayer.

It belongs to the SMDT1/EMRE family.

The protein resides in the mitochondrion inner membrane. In terms of biological role, essential regulatory subunit of the mitochondrial calcium uniporter (mcu) channel, a protein that mediates calcium uptake into mitochondria. This is Essential MCU regulator, mitochondrial from Anopheles gambiae (African malaria mosquito).